The chain runs to 158 residues: uncharacterized protein (158 aa).

The tract at residues 77 to 132 (AIKRNKIGGSKRSEVHSNRSKNYSSKKFRSQKCRRSRQKKRQNKKPNNSRFISSNK) is disordered. A compositionally biased stretch (basic residues) spans 100 to 120 (SSKKFRSQKCRRSRQKKRQNK).

This is an uncharacterized protein from Acanthamoeba polyphaga mimivirus (APMV).